Consider the following 274-residue polypeptide: Small ribosomal subunit protein uS2 (274 aa).

It belongs to the universal ribosomal protein uS2 family.

This is Small ribosomal subunit protein uS2 from Syntrophobacter fumaroxidans (strain DSM 10017 / MPOB).